The following is a 303-amino-acid chain: mRNA-capping enzyme subunit beta (303 aa).

Belongs to the fungal TPase family. In terms of assembly, heterodimer. The mRNA-capping enzyme is composed of two separate chains alpha and beta, respectively a mRNA guanylyltransferase and an mRNA 5'-triphosphate monophosphatase. Requires Mg(2+) as cofactor.

It is found in the nucleus. The catalysed reaction is a 5'-end triphospho-ribonucleoside in mRNA + H2O = a 5'-end diphospho-ribonucleoside in mRNA + phosphate + H(+). Its function is as follows. First step of mRNA capping. Converts the 5'-triphosphate end of a nascent mRNA chain into a diphosphate end. The chain is mRNA-capping enzyme subunit beta (pct1) from Schizosaccharomyces pombe (strain 972 / ATCC 24843) (Fission yeast).